The following is a 148-amino-acid chain: Transcriptional regulator MraZ (148 aa).

SpoVT-AbrB domains lie at 7–56 (KERH…EPDI) and 85–128 (LDVV…APER).

The protein belongs to the MraZ family. As to quaternary structure, forms oligomers.

It localises to the cytoplasm. It is found in the nucleoid. The chain is Transcriptional regulator MraZ from Chlorobium phaeobacteroides (strain DSM 266 / SMG 266 / 2430).